The sequence spans 510 residues: Dermokine (510 aa).

An N-terminal signal peptide occupies residues 1–21 (MKLKGSLACLLLFLLLGSGEA). The disordered stretch occupies residues 117 to 362 (VDPAHKSWQG…SSGEGEAVSG (246 aa)). Residues 124–137 (WQGTPGSNGAWGTN) show a composition bias toward polar residues. The span at 141-158 (PSGGHGIPGSQGSSGGPG) shows a compositional bias: gly residues. The segment covering 194-221 (GANSQGTSPQPGSVRSNNNRNTECTTPP) has biased composition (polar residues). 3 stretches are compositionally biased toward gly residues: residues 222–231 (GSGGSSGNSG), 240–254 (TNGGGSSGGSNGGSN), and 264–292 (SNGGGSSNSGGSNGGGSNGGGSSNGGGSN). Composition is skewed to low complexity over residues 293–303 (AGSSGSSGSSS) and 319–332 (PSPSSGSRVGSGVR). Residues 344–355 (GGSGGQGQGSSG) are compositionally biased toward gly residues.

This sequence belongs to the dermokine family. As to quaternary structure, homooligomer. Seems to be able to homodimerize and homotrimerize. O-glycosylated.

The protein localises to the secreted. In terms of biological role, may act as a soluble regulator of keratinocyte differentiation. The polypeptide is Dermokine (DMKN) (Bos taurus (Bovine)).